Here is a 419-residue protein sequence, read N- to C-terminus: Mitogen-activated protein kinase pmk-2 (419 aa).

The region spanning 49–350 (YNSLKPLGEG…VSSALRHDYL (302 aa)) is the Protein kinase domain. ATP-binding positions include 55-63 (LGEGAYGVV) and Lys-78. The active-site Proton acceptor is Asp-210. Thr-222 carries the phosphothreonine modification. The TXY motif lies at 222–224 (TGY). Tyr-224 carries the post-translational modification Phosphotyrosine.

Belongs to the protein kinase superfamily. CMGC Ser/Thr protein kinase family. MAP kinase subfamily. Mg(2+) serves as cofactor. Post-translationally, dually phosphorylated on Thr-222 and Tyr-224, which activates the enzyme.

Its subcellular location is the cytoplasm. It catalyses the reaction L-seryl-[protein] + ATP = O-phospho-L-seryl-[protein] + ADP + H(+). The enzyme catalyses L-threonyl-[protein] + ATP = O-phospho-L-threonyl-[protein] + ADP + H(+). Its activity is regulated as follows. Activated by phosphorylation on threonine and tyrosine. Inhibited by pyridinyl-imidazole related compounds. Functionally, responds to activation by environmental stress and pro-inflammatory cytokines by phosphorylating downstream targets. The chain is Mitogen-activated protein kinase pmk-2 (pmk-2) from Caenorhabditis elegans.